The following is a 915-amino-acid chain: DNA repair-scaffolding protein (915 aa).

Over residues 1 to 15 the composition is skewed to basic residues; the sequence is MPRGSRARGSKRKRS. Disordered stretches follow at residues 1–30 and 56–114; these read MPRG…RPLQ and FQNT…EDKT. Polar residues predominate over residues 56 to 65; sequence FQNTSGNPSL. Residues 67–85 show a composition bias toward basic and acidic residues; it reads AEEKTITEKHLELCPRPKQ. The segment covering 86–107 has biased composition (polar residues); it reads ETTTSKSTSGLTDITWSSSGSD. A necessary for interaction with RAD51 region spans residues 151 to 450; it reads EISDCASCAS…GTAWTHGHKE (300 aa).

Found in a complex, at least composed of BLM, RAD51 and SPIDR; the complex formation is mediated by SPIDR. Interacts (via C-terminal region) with BLM; the interaction is direct. Interacts with RAD51; the interaction is direct. Interacts (via the C-terminal region) with FIGNL1 (via N-terminal one-half region); the interaction is direct.

The protein resides in the nucleus. Its function is as follows. Plays a role in DNA double-strand break (DBS) repair via homologous recombination (HR). Serves as a scaffolding protein that helps to promote the recruitment of DNA-processing enzymes like the helicase BLM and recombinase RAD51 to site of DNA damage, and hence contributes to maintain genomic integrity. This chain is DNA repair-scaffolding protein (SPIDR), found in Homo sapiens (Human).